Consider the following 283-residue polypeptide: Hydrogenase expression/formation protein HoxQ (283 aa).

A disordered region spans residues 1-29 (MNDDLPILPPGFGPGSHGEEERPDCPSMP).

Belongs to the HupH/HyaF family.

The polypeptide is Hydrogenase expression/formation protein HoxQ (hoxQ) (Azotobacter vinelandii).